A 236-amino-acid chain; its full sequence is Enolase-phosphatase E1 (236 aa).

This sequence belongs to the HAD-like hydrolase superfamily. MasA/MtnC family. As to quaternary structure, monomer. It depends on Mg(2+) as a cofactor.

It carries out the reaction 5-methylsulfanyl-2,3-dioxopentyl phosphate + H2O = 1,2-dihydroxy-5-(methylsulfanyl)pent-1-en-3-one + phosphate. Its pathway is amino-acid biosynthesis; L-methionine biosynthesis via salvage pathway; L-methionine from S-methyl-5-thio-alpha-D-ribose 1-phosphate: step 3/6. It functions in the pathway amino-acid biosynthesis; L-methionine biosynthesis via salvage pathway; L-methionine from S-methyl-5-thio-alpha-D-ribose 1-phosphate: step 4/6. Functionally, bifunctional enzyme that catalyzes the enolization of 2,3-diketo-5-methylthiopentyl-1-phosphate (DK-MTP-1-P) into the intermediate 2-hydroxy-3-keto-5-methylthiopentenyl-1-phosphate (HK-MTPenyl-1-P), which is then dephosphorylated to form the acireductone 1,2-dihydroxy-3-keto-5-methylthiopentene (DHK-MTPene). The polypeptide is Enolase-phosphatase E1 (Frankia alni (strain DSM 45986 / CECT 9034 / ACN14a)).